We begin with the raw amino-acid sequence, 198 residues long: MSRLILASASAARRSLLQNAGLAFESLPVRIDEDAIRQSLITEGATPRDIADALAEFKARKATERAPGHLILASDQILALRGEIFAKPRDREDAARDLHRLSGHTHHLYSAAVIYEDAKPVWRGVGTARLSMHTHSEAQINAYLDQAWPDVSSSVGAYHAEGLGAQLFSRIEGDWFSVLGLPLLQVLSYLRMRGMVAP.

The Proton acceptor role is filled by D75.

Belongs to the Maf family. It depends on a divalent metal cation as a cofactor.

It is found in the cytoplasm. The catalysed reaction is a ribonucleoside 5'-triphosphate + H2O = a ribonucleoside 5'-phosphate + diphosphate + H(+). The enzyme catalyses a 2'-deoxyribonucleoside 5'-triphosphate + H2O = a 2'-deoxyribonucleoside 5'-phosphate + diphosphate + H(+). In terms of biological role, nucleoside triphosphate pyrophosphatase. May have a dual role in cell division arrest and in preventing the incorporation of modified nucleotides into cellular nucleic acids. The protein is Nucleoside triphosphate pyrophosphatase 1 of Jannaschia sp. (strain CCS1).